The chain runs to 133 residues: Fluoride-specific ion channel FluC 4 (133 aa).

3 helical membrane passes run Ile-7–Val-27, Trp-37–Gly-57, and Leu-60–Gly-80. Residues Gly-79 and Thr-82 each coordinate Na(+). The chain crosses the membrane as a helical span at residues Ile-107–Trp-127.

The protein belongs to the fluoride channel Fluc/FEX (TC 1.A.43) family.

The protein localises to the cell inner membrane. The enzyme catalyses fluoride(in) = fluoride(out). Its activity is regulated as follows. Na(+) is not transported, but it plays an essential structural role and its presence is essential for fluoride channel function. In terms of biological role, fluoride-specific ion channel. Important for reducing fluoride concentration in the cell, thus reducing its toxicity. The polypeptide is Fluoride-specific ion channel FluC 4 (Brucella abortus biovar 1 (strain 9-941)).